Here is a 129-residue protein sequence, read N- to C-terminus: Membrane protein 0 (129 aa).

The interval 1–25 is disordered; it reads MATVHYSRRPGTPPVTLTSSPSMDD. The short motif at 44–47 is the PPXY motif element; that stretch reads PPPY. The chain crosses the membrane as a helical span at residues 100-120; the sequence is FLILFGILTLTAVVVAIVAVF.

Belongs to the varicellovirus ORF0 protein family. In terms of assembly, interacts with host ITCH; this interaction probably mediates ITCH degradation.

It localises to the host Golgi apparatus membrane. The protein is Membrane protein 0 of Homo sapiens (Human).